The following is a 301-amino-acid chain: tRNA-cytidine(32) 2-sulfurtransferase (301 aa).

Positions 55–60 (SGGKDS) match the PP-loop motif motif. [4Fe-4S] cluster is bound by residues Cys-130, Cys-133, and Cys-221.

This sequence belongs to the TtcA family. Homodimer. Requires Mg(2+) as cofactor. It depends on [4Fe-4S] cluster as a cofactor.

The protein localises to the cytoplasm. The enzyme catalyses cytidine(32) in tRNA + S-sulfanyl-L-cysteinyl-[cysteine desulfurase] + AH2 + ATP = 2-thiocytidine(32) in tRNA + L-cysteinyl-[cysteine desulfurase] + A + AMP + diphosphate + H(+). It participates in tRNA modification. Functionally, catalyzes the ATP-dependent 2-thiolation of cytidine in position 32 of tRNA, to form 2-thiocytidine (s(2)C32). The sulfur atoms are provided by the cysteine/cysteine desulfurase (IscS) system. In Acinetobacter baumannii (strain AB307-0294), this protein is tRNA-cytidine(32) 2-sulfurtransferase.